We begin with the raw amino-acid sequence, 466 residues long: Glucose-6-phosphate 1-dehydrogenase 1 (466 aa).

NADP(+)-binding positions include Ser-48, 88–89, and Lys-141; that span reads DV. Positions 171, 175, 209, and 228 each coordinate substrate. His-233 serves as the catalytic Proton acceptor. 2 residues coordinate substrate: Lys-319 and Lys-324.

This sequence belongs to the glucose-6-phosphate dehydrogenase family.

It carries out the reaction D-glucose 6-phosphate + NADP(+) = 6-phospho-D-glucono-1,5-lactone + NADPH + H(+). The protein operates within carbohydrate degradation; pentose phosphate pathway; D-ribulose 5-phosphate from D-glucose 6-phosphate (oxidative stage): step 1/3. In terms of biological role, catalyzes the oxidation of glucose 6-phosphate to 6-phosphogluconolactone. The sequence is that of Glucose-6-phosphate 1-dehydrogenase 1 from Mycobacterium tuberculosis (strain ATCC 25618 / H37Rv).